Consider the following 864-residue polypeptide: Leucine--tRNA ligase (864 aa).

A 'HIGH' region motif is present at residues 47–57 (PYPSGNLHMGH). Residues 298-317 (SEQDRVADDRPKRGVATGGT) are disordered. Over residues 299-309 (EQDRVADDRPK) the composition is skewed to basic and acidic residues. The short motif at 622 to 626 (KMSKS) is the 'KMSKS' region element. Residue K625 coordinates ATP.

The protein belongs to the class-I aminoacyl-tRNA synthetase family.

It is found in the cytoplasm. It catalyses the reaction tRNA(Leu) + L-leucine + ATP = L-leucyl-tRNA(Leu) + AMP + diphosphate. This chain is Leucine--tRNA ligase, found in Synechococcus sp. (strain RCC307).